Here is a 163-residue protein sequence, read N- to C-terminus: Urease accessory protein UreE (163 aa).

A disordered region spans residues 144-163 (QPEPGAYGGSSAGSHDGHHH).

The protein belongs to the UreE family.

Its subcellular location is the cytoplasm. Its function is as follows. Involved in urease metallocenter assembly. Binds nickel. Probably functions as a nickel donor during metallocenter assembly. The chain is Urease accessory protein UreE from Aliivibrio fischeri (strain ATCC 700601 / ES114) (Vibrio fischeri).